The following is a 325-amino-acid chain: Elongation factor P--(R)-beta-lysine ligase (325 aa).

76–78 lines the substrate pocket; that stretch reads SPE. ATP is bound by residues 100-102 and Asn109; that span reads RNE. Residue Tyr118 participates in substrate binding. 244–245 lines the ATP pocket; that stretch reads EL. Residue Glu251 coordinates substrate. Gly300 provides a ligand contact to ATP.

This sequence belongs to the class-II aminoacyl-tRNA synthetase family. EpmA subfamily. In terms of assembly, homodimer.

The catalysed reaction is D-beta-lysine + L-lysyl-[protein] + ATP = N(6)-((3R)-3,6-diaminohexanoyl)-L-lysyl-[protein] + AMP + diphosphate + H(+). With EpmB is involved in the beta-lysylation step of the post-translational modification of translation elongation factor P (EF-P) on 'Lys-34'. Catalyzes the ATP-dependent activation of (R)-beta-lysine produced by EpmB, forming a lysyl-adenylate, from which the beta-lysyl moiety is then transferred to the epsilon-amino group of EF-P 'Lys-34'. This chain is Elongation factor P--(R)-beta-lysine ligase, found in Salmonella typhi.